The primary structure comprises 485 residues: Aspartyl/glutamyl-tRNA(Asn/Gln) amidotransferase subunit B (485 aa).

It belongs to the GatB/GatE family. GatB subfamily. Heterotrimer of A, B and C subunits.

It catalyses the reaction L-glutamyl-tRNA(Gln) + L-glutamine + ATP + H2O = L-glutaminyl-tRNA(Gln) + L-glutamate + ADP + phosphate + H(+). The enzyme catalyses L-aspartyl-tRNA(Asn) + L-glutamine + ATP + H2O = L-asparaginyl-tRNA(Asn) + L-glutamate + ADP + phosphate + 2 H(+). Allows the formation of correctly charged Asn-tRNA(Asn) or Gln-tRNA(Gln) through the transamidation of misacylated Asp-tRNA(Asn) or Glu-tRNA(Gln) in organisms which lack either or both of asparaginyl-tRNA or glutaminyl-tRNA synthetases. The reaction takes place in the presence of glutamine and ATP through an activated phospho-Asp-tRNA(Asn) or phospho-Glu-tRNA(Gln). This chain is Aspartyl/glutamyl-tRNA(Asn/Gln) amidotransferase subunit B, found in Paramagnetospirillum magneticum (strain ATCC 700264 / AMB-1) (Magnetospirillum magneticum).